Consider the following 403-residue polypeptide: Phosphoglycerate kinase (403 aa).

Substrate is bound by residues 24–26 (DLN), Arg-39, 62–65 (HLGR), Arg-121, and Arg-161. ATP-binding positions include Lys-211, Gly-299, Glu-330, and 359-362 (GGDS).

It belongs to the phosphoglycerate kinase family. As to quaternary structure, monomer.

Its subcellular location is the cytoplasm. The enzyme catalyses (2R)-3-phosphoglycerate + ATP = (2R)-3-phospho-glyceroyl phosphate + ADP. It participates in carbohydrate degradation; glycolysis; pyruvate from D-glyceraldehyde 3-phosphate: step 2/5. This Rhodococcus erythropolis (strain PR4 / NBRC 100887) protein is Phosphoglycerate kinase.